The primary structure comprises 225 residues: Cytidylate kinase (225 aa).

ATP is bound at residue 11 to 19 (GPAAAGKST).

This sequence belongs to the cytidylate kinase family. Type 1 subfamily.

Its subcellular location is the cytoplasm. It carries out the reaction CMP + ATP = CDP + ADP. It catalyses the reaction dCMP + ATP = dCDP + ADP. This Anoxybacillus flavithermus (strain DSM 21510 / WK1) protein is Cytidylate kinase.